Reading from the N-terminus, the 153-residue chain is MADWFASPLKTCTHVCDFPTLAGDPSQEITCCDSMKNKLNDSRKVLLVSCSVSFNGSFYGGNRNVRGQLQISMLEDDGVCRPIGYVPIGGYLYHNDYGYYEGEKTFNLDIESQYLKKDEDYNRKFIVSVLNENGLDSLCDLKVFIVHALRIKV.

It belongs to the nanoviridae nuclear shuttle protein family.

The protein resides in the host nucleus. Its subcellular location is the host cytoplasm. In terms of biological role, putative nuclear shuttle protein. This chain is Putative nuclear shuttle protein (DNA-N), found in Astragalus sinicus (Chinese milk vetch).